The chain runs to 877 residues: Leucine--tRNA ligase (877 aa).

The 'HIGH' region motif lies at 43-53; that stretch reads PYPSGRIHMGH. Positions 628–632 match the 'KMSKS' region motif; sequence KMSKS. K631 provides a ligand contact to ATP.

This sequence belongs to the class-I aminoacyl-tRNA synthetase family.

It is found in the cytoplasm. It catalyses the reaction tRNA(Leu) + L-leucine + ATP = L-leucyl-tRNA(Leu) + AMP + diphosphate. The polypeptide is Leucine--tRNA ligase (Brucella melitensis biotype 2 (strain ATCC 23457)).